A 521-amino-acid chain; its full sequence is uncharacterized protein (521 aa).

A disordered region spans residues 1-25; it reads MLQRSLGVNGRKLAMSARSAKRERK. 6 helical membrane passes run 68–88, 114–134, 160–180, 192–212, 290–310, and 399–419; these read GAVW…GAVL, VLIV…SLTV, VVLA…HTVG, VAVT…IYFL, ALLV…GWCW, and LLFW…CAQI.

It localises to the cell membrane. This is an uncharacterized protein from Mycobacterium bovis (strain ATCC BAA-935 / AF2122/97).